Reading from the N-terminus, the 482-residue chain is MAPNAADKCPVMNNAAEKCPVMHSNGVSSIQSHGPRDIYTLEALSHFNREKIPERAVHAKGTGAYGEFEVTADISDICNVDMLLGVGKKTQCVTRFSTTGLERGSSDGVRDLKGMAVKFFTEQGDWDWVSLNFPFFFIRDPAKFPDMIHSQRRDPQTNLLNPSMTWDFVTKNPEALHMTLLQHSDFGTMFTWRTLSSYAGHAFKWVMPDGSFKYVHFFLASDRGPNFTDGSTAKIDPNDPDFATKDLFEAIERGDYPTWTANVQVIDPKDAPKLGFNILDITKHWNLGTYPKGLDTIPSRPFGKLTLNRNVKDYFTEVEKLAFSPSNLVPGVEPSEDPILQARMFAYPDAQRYRLGIDHLKAPIRRKETSCKHDLGPEFDQWLSQVTSESWSHPHEDDYKFAREYYEVLPEFRSQEFQDRMVENLYKSVAQGPEDLRKRVYETFELVSTELARRVREGAEVIVADMAQPDSPERAQPGQQRL.

Residue His-58 is part of the active site. Tyr-347 is a binding site for heme.

It belongs to the catalase family. The cofactor is heme.

The protein operates within alkaloid biosynthesis; ergot alkaloid biosynthesis. Its function is as follows. Catalase; part of the gene cluster that mediates the biosynthesis of fungal ergot alkaloid. DmaW catalyzes the first step of ergot alkaloid biosynthesis by condensing dimethylallyl diphosphate (DMAP) and tryptophan to form 4-dimethylallyl-L-tryptophan. The second step is catalyzed by the methyltransferase easF that methylates 4-dimethylallyl-L-tryptophan in the presence of S-adenosyl-L-methionine, resulting in the formation of 4-dimethylallyl-L-abrine. The catalase easC and the FAD-dependent oxidoreductase easE then transform 4-dimethylallyl-L-abrine to chanoclavine-I which is further oxidized by easD in the presence of NAD(+), resulting in the formation of chanoclavine-I aldehyde. Chanoclavine-I aldehyde is the precursor of ergoamides and ergopeptines in Clavicipitaceae, and clavine-type alcaloids such as fumiclavine in Trichocomaceae. However, the metabolites downstream of chanoclavine-I aldehyde in Arthrodermataceae have not been identified yet. The polypeptide is Catalase easC (Arthroderma otae (strain ATCC MYA-4605 / CBS 113480) (Microsporum canis)).